The primary structure comprises 302 residues: Probable proteasome inhibitor (302 aa).

Ala2 carries the post-translational modification N-acetylalanine. Disordered regions lie at residues 151 to 188 and 259 to 302; these read LDGK…QIHP and ARFD…SDFI. Residues 259–269 show a composition bias toward pro residues; sequence ARFDPYGPPGV.

It belongs to the proteasome inhibitor PI31 family.

Could play an important role in control of proteasome function. Inhibits the hydrolysis of protein and peptide substrates by the 20S proteasome. This chain is Probable proteasome inhibitor, found in Arabidopsis thaliana (Mouse-ear cress).